The chain runs to 178 residues: Large ribosomal subunit protein uL6 (178 aa).

It belongs to the universal ribosomal protein uL6 family. Part of the 50S ribosomal subunit.

This protein binds to the 23S rRNA, and is important in its secondary structure. It is located near the subunit interface in the base of the L7/L12 stalk, and near the tRNA binding site of the peptidyltransferase center. The sequence is that of Large ribosomal subunit protein uL6 from Nautilia profundicola (strain ATCC BAA-1463 / DSM 18972 / AmH).